A 205-amino-acid chain; its full sequence is Cytochrome c biogenesis ATP-binding export protein CcmA 1 (205 aa).

An ABC transporter domain is found at 2 to 205 (LEARDLYCER…LALTGGEAGL (204 aa)). 34 to 41 (GGNGAGKT) lines the ATP pocket.

It belongs to the ABC transporter superfamily. CcmA exporter (TC 3.A.1.107) family. As to quaternary structure, the complex is composed of two ATP-binding proteins (CcmA) and two transmembrane proteins (CcmB).

The protein resides in the cell inner membrane. It carries out the reaction heme b(in) + ATP + H2O = heme b(out) + ADP + phosphate + H(+). In terms of biological role, part of the ABC transporter complex CcmAB involved in the biogenesis of c-type cytochromes; once thought to export heme, this seems not to be the case, but its exact role is uncertain. Responsible for energy coupling to the transport system. This Salmonella paratyphi A (strain ATCC 9150 / SARB42) protein is Cytochrome c biogenesis ATP-binding export protein CcmA 1.